Here is a 434-residue protein sequence, read N- to C-terminus: Trigger factor (434 aa).

The PPIase FKBP-type domain occupies 161–246 (EDRVTVDFNG…LKKVEERELP (86 aa)).

This sequence belongs to the FKBP-type PPIase family. Tig subfamily.

The protein resides in the cytoplasm. It catalyses the reaction [protein]-peptidylproline (omega=180) = [protein]-peptidylproline (omega=0). In terms of biological role, involved in protein export. Acts as a chaperone by maintaining the newly synthesized protein in an open conformation. Functions as a peptidyl-prolyl cis-trans isomerase. The protein is Trigger factor of Proteus mirabilis (strain HI4320).